Reading from the N-terminus, the 114-residue chain is MNHPTRLPLDFTEAAARKFKELIANEHNSNKKLRVYVEGGGCNGFKYMFTLDDKVNEGDLAINKQGVSLVVDPLSLGYLIGGIVDYVESIEYSRFIVKNLNAKTTCGCGSSFSV.

Iron-sulfur cluster is bound by residues cysteine 42, cysteine 106, and cysteine 108.

This sequence belongs to the HesB/IscA family. In terms of assembly, homodimer. Iron-sulfur cluster serves as cofactor.

In terms of biological role, required for insertion of 4Fe-4S clusters for at least IspG. This is Iron-sulfur cluster insertion protein ErpA from Hamiltonella defensa subsp. Acyrthosiphon pisum (strain 5AT).